The primary structure comprises 299 residues: Taste receptor type 2 member 5 (299 aa).

Position 1 (methionine 1) is a topological domain, extracellular. The helical transmembrane segment at 2–22 threads the bilayer; sequence LSAGLGLLMLVAVVEFLIGLI. Over 23 to 45 the chain is Cytoplasmic; that stretch reads GNGVLVVWSFREWIRKFSWSSYN. A helical membrane pass occupies residues 46-66; that stretch reads LIILGLAGCRFVLQWLIILDL. Over 67–82 the chain is Extracellular; it reads SLFPLFQSSRWLRYLS. The chain crosses the membrane as a helical span at residues 83–103; that stretch reads IFWVLVSQASLWFATFLSVFY. Residues 104–127 lie on the Cytoplasmic side of the membrane; the sequence is CKKITTFDHPAYLWLKQRAYNLSL. Residues 128-148 traverse the membrane as a helical segment; it reads WCLLGYFIINLLLTVQIGLMF. The Extracellular segment spans residues 149–175; sequence YHPPQGNSSIRYPFESWQYLYAFRLNS. Asparagine 155 carries an N-linked (GlcNAc...) asparagine glycan. The chain crosses the membrane as a helical span at residues 176 to 196; that stretch reads GSYLPLMVFLVSSGMLIVSLY. Over 197–223 the chain is Cytoplasmic; sequence THHKKMKVHSAGRRDVRAKAHITALKS. A helical membrane pass occupies residues 224–244; it reads LGCFLLLHLVYIMASPFSIAS. Topologically, residues 245–253 are extracellular; that stretch reads KTYPPDLTS. The chain crosses the membrane as a helical span at residues 254-274; the sequence is VFIWETLMAAYPSLHSLILIM. The Cytoplasmic segment spans residues 275 to 299; sequence GIPRVKQTCQKIXWKTVCARRCWGP.

It belongs to the G-protein coupled receptor T2R family.

It is found in the membrane. Receptor that may play a role in the perception of bitterness and is gustducin-linked. May play a role in sensing the chemical composition of the gastrointestinal content. The activity of this receptor may stimulate alpha gustducin, mediate PLC-beta-2 activation and lead to the gating of TRPM5. This is Taste receptor type 2 member 5 (TAS2R5) from Pan troglodytes (Chimpanzee).